Consider the following 103-residue polypeptide: Large ribosomal subunit protein bL21 (103 aa).

Belongs to the bacterial ribosomal protein bL21 family. Part of the 50S ribosomal subunit. Contacts protein L20.

This protein binds to 23S rRNA in the presence of protein L20. The chain is Large ribosomal subunit protein bL21 from Polaromonas sp. (strain JS666 / ATCC BAA-500).